Here is a 190-residue protein sequence, read N- to C-terminus: Protein A52 (190 aa).

The protein belongs to the orthopoxvirus A52R protein family. As to quaternary structure, interacts with host TRAF6 and IRAK2.

In terms of biological role, bcl-2-like protein which targets host toll-like receptor signaling complexes to suppress innate immune response. Interacts with host TRAF6 to activate p38 and subsequently induce the expression of several cytokines such as IL-10. Also associates with host IRAK2 to inhibit NF-kappa-B signaling. The polypeptide is Protein A52 (Vaccinia virus (strain Western Reserve) (VACV)).